The chain runs to 73 residues: Putative membrane protein insertion efficiency factor (73 aa).

It belongs to the UPF0161 family.

The protein resides in the cell inner membrane. Functionally, could be involved in insertion of integral membrane proteins into the membrane. This is Putative membrane protein insertion efficiency factor from Neisseria gonorrhoeae (strain ATCC 700825 / FA 1090).